The chain runs to 150 residues: Large ribosomal subunit protein bL9 (150 aa).

Belongs to the bacterial ribosomal protein bL9 family.

Functionally, binds to the 23S rRNA. This is Large ribosomal subunit protein bL9 from Streptococcus mutans serotype c (strain ATCC 700610 / UA159).